A 70-amino-acid polypeptide reads, in one-letter code: Brevinin-1MT1 (70 aa).

The signal sequence occupies residues 1-22 (MFTLKKSLLLLFFLGTINLSLC). A propeptide spanning residues 23–44 (EQERDADEEERRDDDEMDVEVE) is cleaved from the precursor. A disulfide bond links Cys64 and Cys70.

This sequence belongs to the frog skin active peptide (FSAP) family. Brevinin subfamily. As to expression, expressed by the skin glands.

It localises to the secreted. Functionally, antimicrobial peptide with activity against a variety of Gram-negative and Gram-positive bacteria and against fungi. Shows strong hemolytic activity against human erythrocytes. This chain is Brevinin-1MT1, found in Amolops mantzorum (Sichuan torrent frog).